We begin with the raw amino-acid sequence, 778 residues long: pH-response regulator protein palH/prr-4 (778 aa).

At 1 to 108 (MEPRQLFSDP…DPFYASTFPQ (108 aa)) the chain is on the extracellular side. Residues 109 to 129 (CYALAATTIIAYTLVIMLFIT) traverse the membrane as a helical segment. Topologically, residues 130-160 (PRSFLDGGVVVLGRKGFTNGGGGTSIGGRPW) are periplasmic. A helical membrane pass occupies residues 161-181 (LQKVAALSVAISLTIANAATF). At 182–201 (RAAEQQYSWGVQNAKQLQED) the chain is on the extracellular side. Residues 202–222 (VLGGAELKIIRIISDTFLWLA) traverse the membrane as a helical segment. Residues 223-237 (QAQTLIRLFPRQREK) are Periplasmic-facing. Residues 238–258 (VIIKWTAFALITLDVIFQSLN) traverse the membrane as a helical segment. The Extracellular segment spans residues 259 to 275 (SFKYGGSDLTRPKFTEA). The chain crosses the membrane as a helical span at residues 276–296 (VPALSYLFALALGVLYAAWVL). Residues 297–314 (YYSIMKKRYAFYHPLMKN) are Periplasmic-facing. Residues 315-335 (MILVAVLSVVSILVPVVFFIL) traverse the membrane as a helical segment. Residues 336–341 (DISKPD) lie on the Extracellular side of the membrane. The chain crosses the membrane as a helical span at residues 342 to 362 (FAGWGDYVRWVGAAAASVIVW). Over 363-778 (EWVERIEALE…RSDSSTTPSP (416 aa)) the chain is Periplasmic. Disordered stretches follow at residues 394–499 (ASQS…DTTS), 514–605 (ELTS…DENS), and 660–778 (ELNH…TPSP). Positions 446–456 (HRTEPSSRNEP) are enriched in basic and acidic residues. Residues 457–466 (NEGSSPVAET) are compositionally biased toward polar residues. Composition is skewed to basic and acidic residues over residues 588-605 (FVTR…DENS) and 661-675 (LNHS…EESR). The segment covering 720 to 732 (PIVTQGSFTNNRY) has biased composition (polar residues). Low complexity predominate over residues 749 to 759 (ARAPSQPQSPS). Residues 769–778 (RSDSSTTPSP) show a composition bias toward polar residues.

The protein belongs to the palH/RIM21 family.

The protein resides in the cell membrane. In terms of biological role, required for the proteolytic cleavage of the transcription factor pacc-1 in response to alkaline ambient pH. The polypeptide is pH-response regulator protein palH/prr-4 (prr-4) (Neurospora crassa (strain ATCC 24698 / 74-OR23-1A / CBS 708.71 / DSM 1257 / FGSC 987)).